The following is a 236-amino-acid chain: MLQSILRRIVKALLWFAAGSVLVVLVLRWVPPPGTALMVERKVESWFDGEPIDLQRDWEPLDKISDNLKIAVIAGEDQKFAEHWGFDVDAIQAAILHNERGGSIRGASTLSQQVSKNLFLWSGRSYLRKGLEAWFTMLIELLWSKERILEVYLNSVEWDEGVFGAQAAAQHHFRTNASALSAQQASYLAAVLPNPRQWSASHPSSYVSRRAGWIRQQMRQLGGDEYLQGLNSSRRW.

A helical membrane pass occupies residues 12–31; the sequence is ALLWFAAGSVLVVLVLRWVP.

This sequence belongs to the glycosyltransferase 51 family.

Its subcellular location is the cell inner membrane. It catalyses the reaction [GlcNAc-(1-&gt;4)-Mur2Ac(oyl-L-Ala-gamma-D-Glu-L-Lys-D-Ala-D-Ala)](n)-di-trans,octa-cis-undecaprenyl diphosphate + beta-D-GlcNAc-(1-&gt;4)-Mur2Ac(oyl-L-Ala-gamma-D-Glu-L-Lys-D-Ala-D-Ala)-di-trans,octa-cis-undecaprenyl diphosphate = [GlcNAc-(1-&gt;4)-Mur2Ac(oyl-L-Ala-gamma-D-Glu-L-Lys-D-Ala-D-Ala)](n+1)-di-trans,octa-cis-undecaprenyl diphosphate + di-trans,octa-cis-undecaprenyl diphosphate + H(+). It participates in cell wall biogenesis; peptidoglycan biosynthesis. Peptidoglycan polymerase that catalyzes glycan chain elongation from lipid-linked precursors. In Pseudomonas syringae pv. syringae (strain B728a), this protein is Biosynthetic peptidoglycan transglycosylase.